Consider the following 1400-residue polypeptide: Alpha-(1-&gt;3)-arabinofuranosyltransferase (1400 aa).

Residues 1-30 form the signal peptide; it reads MAPLSRKWLPVVGAVALALTFAQSPGQVSP. 8 helical membrane passes run 67–87, 91–111, 139–159, 179–199, 215–235, 282–302, 314–334, and 401–421; these read YLFP…PGWV, LWWA…AEAL, ISSE…TILA, VALM…PAVI, AWWL…LTQL, LVTG…GLAG, LVTM…GGLA, and VAVA…AWTG. One can recognise an F5/8 type C domain in the interval 700-883; sequence AEPVVGGWTG…WDLGSELLGR (184 aa). The next 4 membrane-spanning stretches (helical) occupy residues 1256 to 1276, 1297 to 1317, 1338 to 1358, and 1369 to 1389; these read LYRA…LLAF, WAAA…GVMV, VTVG…SRHP, and WASV…SVVA.

The protein resides in the membrane. It carries out the reaction Adds an alpha-D-arabinofuranosyl group from trans,octacis-decaprenylphospho-beta-D-arabinofuranose at the 3-O-position of an alpha-(1-&gt;5)-arabinofuranan chain attached to a beta-(1-&gt;5)-galactofuranan chain.. The protein operates within cell wall biogenesis; cell wall polysaccharide biosynthesis. In terms of biological role, involved in the biosynthesis of the arabinogalactan (AG) region of the mycolylarabinogalactan-peptidoglycan (mAGP) complex, an essential component of the mycobacterial cell wall. Catalyzes the addition of an arabinofuranosyl (Araf) residue from the sugar donor decaprenyl-phospho-arabinose (DPA) on the C-3 of an alpha-(1-&gt;5)-linked Araf from the arabinan backbone of AG. In Mycobacterium tuberculosis (strain ATCC 25618 / H37Rv), this protein is Alpha-(1-&gt;3)-arabinofuranosyltransferase (aftD).